Reading from the N-terminus, the 402-residue chain is 4-hydroxy-3-methylbut-2-en-1-yl diphosphate synthase (ferredoxin) (402 aa).

Residues Cys-311, Cys-314, Cys-345, and Glu-352 each contribute to the [4Fe-4S] cluster site.

It belongs to the IspG family. It depends on [4Fe-4S] cluster as a cofactor.

It catalyses the reaction (2E)-4-hydroxy-3-methylbut-2-enyl diphosphate + 2 oxidized [2Fe-2S]-[ferredoxin] + H2O = 2-C-methyl-D-erythritol 2,4-cyclic diphosphate + 2 reduced [2Fe-2S]-[ferredoxin] + H(+). The protein operates within isoprenoid biosynthesis; isopentenyl diphosphate biosynthesis via DXP pathway; isopentenyl diphosphate from 1-deoxy-D-xylulose 5-phosphate: step 5/6. In terms of biological role, converts 2C-methyl-D-erythritol 2,4-cyclodiphosphate (ME-2,4cPP) into 1-hydroxy-2-methyl-2-(E)-butenyl 4-diphosphate, using ferredoxin I (PetF) as the reducing agent. This Thermosynechococcus vestitus (strain NIES-2133 / IAM M-273 / BP-1) protein is 4-hydroxy-3-methylbut-2-en-1-yl diphosphate synthase (ferredoxin).